Reading from the N-terminus, the 423-residue chain is MLETLSRQWIVSHRMEMWLLILVAYMFQRNVNSVHMPTKAVDPEAFMNISEIIQHQGYPCEEYEVATEDGYILSVNRIPRGLVQPKKTGSRPVVLLQHGLVGGASNWISNLPNNSLGFILADAGFDVWMGNSRGNAWSRKHKTLSIDQDEFWAFSYDEMARFDLPAVINFILQKTGQEKIYYVGYSQGTTMGFIAFSTMPELAQKIKMYFALAPIATVKHAKSPGTKFLLLPDMMIKGLFGKKEFLYQTRFLRQLVIYLCGQVILDQICSNIMLLLGGFNTNNMNMSRASVYAAHTLAGTSVQNILHWSQAVNSGELRAFDWGSETKNLEKCNQPTPVRYRVRDMTVPTAMWTGGQDWLSNPEDVKMLLSEVTNLIYHKNIPEWAHVDFIWGLDAPHRMYNEIIHLMQQEETNLSQGRCEAVL.

The first 33 residues, 1 to 33, serve as a signal peptide directing secretion; it reads MLETLSRQWIVSHRMEMWLLILVAYMFQRNVNS. Asn48 carries an N-linked (GlcNAc...) asparagine glycan. In terms of domain architecture, AB hydrolase-1 spans 92–392; sequence PVVLLQHGLV…EWAHVDFIWG (301 aa). The active-site Nucleophile is Ser186. Cys260 and Cys269 are joined by a disulfide. Catalysis depends on charge relay system residues Asp357 and His386.

It belongs to the AB hydrolase superfamily. Lipase family. In terms of tissue distribution, exclusively expressed in the epidermis within the granular keratinocytes.

It is found in the secreted. Plays a highly specific role in the last step of keratinocyte differentiation. May have an essential function in lipid metabolism of the most differentiated epidermal layers. In Homo sapiens (Human), this protein is Lipase member M (LIPM).